The sequence spans 179 residues: ATP synthase subunit delta (179 aa).

It belongs to the ATPase delta chain family. As to quaternary structure, F-type ATPases have 2 components, F(1) - the catalytic core - and F(0) - the membrane proton channel. F(1) has five subunits: alpha(3), beta(3), gamma(1), delta(1), epsilon(1). F(0) has three main subunits: a(1), b(2) and c(10-14). The alpha and beta chains form an alternating ring which encloses part of the gamma chain. F(1) is attached to F(0) by a central stalk formed by the gamma and epsilon chains, while a peripheral stalk is formed by the delta and b chains.

Its subcellular location is the cell membrane. F(1)F(0) ATP synthase produces ATP from ADP in the presence of a proton or sodium gradient. F-type ATPases consist of two structural domains, F(1) containing the extramembraneous catalytic core and F(0) containing the membrane proton channel, linked together by a central stalk and a peripheral stalk. During catalysis, ATP synthesis in the catalytic domain of F(1) is coupled via a rotary mechanism of the central stalk subunits to proton translocation. In terms of biological role, this protein is part of the stalk that links CF(0) to CF(1). It either transmits conformational changes from CF(0) to CF(1) or is implicated in proton conduction. This Clostridium botulinum (strain 657 / Type Ba4) protein is ATP synthase subunit delta.